A 358-amino-acid polypeptide reads, in one-letter code: Small ribosomal subunit biogenesis GTPase RsgA (358 aa).

One can recognise a CP-type G domain in the interval serine 76–proline 234. Residues asparagine 125–aspartate 128 and glycine 176–serine 184 contribute to the GTP site. 4 residues coordinate Zn(2+): cysteine 259, cysteine 264, histidine 266, and cysteine 272. The tract at residues threonine 319 to glutamate 358 is disordered. The span at alanine 325–glycine 336 shows a compositional bias: basic residues. The span at lysine 337–threonine 348 shows a compositional bias: basic and acidic residues.

This sequence belongs to the TRAFAC class YlqF/YawG GTPase family. RsgA subfamily. As to quaternary structure, monomer. Associates with 30S ribosomal subunit, binds 16S rRNA. Zn(2+) serves as cofactor.

Its subcellular location is the cytoplasm. Functionally, one of several proteins that assist in the late maturation steps of the functional core of the 30S ribosomal subunit. Helps release RbfA from mature subunits. May play a role in the assembly of ribosomal proteins into the subunit. Circularly permuted GTPase that catalyzes slow GTP hydrolysis, GTPase activity is stimulated by the 30S ribosomal subunit. The protein is Small ribosomal subunit biogenesis GTPase RsgA of Microcystis aeruginosa (strain NIES-843 / IAM M-2473).